A 439-amino-acid polypeptide reads, in one-letter code: FK506-binding protein 59 (439 aa).

PPIase FKBP-type domains follow at residues 32-120 (GCTV…LGWK) and 149-235 (GAFV…VDCG). TPR repeat units lie at residues 252-285 (AKVY…LPTT), 297-330 (VATH…DKNN), and 331-364 (VKAL…EPGN).

In terms of assembly, interacts with inaD and trpl, and may be part of the inaD signaling complex. As to expression, expression in the embryo is limited to three tissues: lymph glands, Garland cells and oenocyte cells.

The catalysed reaction is [protein]-peptidylproline (omega=180) = [protein]-peptidylproline (omega=0). Functionally, may have a role in phototransduction; inhibits or prevents Ca(2+) induced stimulation of the trpl ion channel. The chain is FK506-binding protein 59 from Drosophila melanogaster (Fruit fly).